Reading from the N-terminus, the 172-residue chain is uncharacterized protein (172 aa).

2 disordered regions span residues 1–39 and 90–112; these read MAKV…NSNN and DLNG…GSIN. The segment covering 98–110 has biased composition (low complexity); it reads NDSNNDNSPSRGS.

This is an uncharacterized protein from Dictyostelium discoideum (Social amoeba).